Consider the following 583-residue polypeptide: ATP-dependent lipid A-core flippase (583 aa).

7 helical membrane passes run 18-38 (LWPI…TLII), 65-85 (IFMW…MSGF), 105-127 (LLFN…ATLM), 143-163 (GALI…IMMF), 167-187 (WQLS…IKLV), 252-272 (VFEP…LYIA), and 277-297 (VIEM…IALM). Residues 30–312 (IIASITLIIN…LTNVSAQFQR (283 aa)) enclose the ABC transmembrane type-1 domain. The 237-residue stretch at 344-580 (IIFDNVTFFY…KGVYSQLYKF (237 aa)) folds into the ABC transporter domain. An ATP-binding site is contributed by 378 to 385 (GRSGSGKS).

This sequence belongs to the ABC transporter superfamily. Lipid exporter (TC 3.A.1.106) family. Homodimer.

Its subcellular location is the cell inner membrane. The catalysed reaction is ATP + H2O + lipid A-core oligosaccharideSide 1 = ADP + phosphate + lipid A-core oligosaccharideSide 2.. Involved in lipopolysaccharide (LPS) biosynthesis. Translocates lipid A-core from the inner to the outer leaflet of the inner membrane. Transmembrane domains (TMD) form a pore in the inner membrane and the ATP-binding domain (NBD) is responsible for energy generation. This chain is ATP-dependent lipid A-core flippase, found in Blochmanniella floridana.